The sequence spans 138 residues: MAAKVASGTNKVFQNHDDVHISFEDQQRINRFAKHNARMDDFKAELETKRNELKSLEEALEEIELFDEDEDIPFLVGEVFLSHKLEKTQDMLKETKEQVLKEIAGVEAKAKVIKAEMDELKAHLYQRFGSNISLEAED.

This sequence belongs to the prefoldin subunit beta family. Heterohexamer of two PFD-alpha type and four PFD-beta type subunits.

Binds specifically to cytosolic chaperonin (c-CPN) and transfers target proteins to it. Binds to nascent polypeptide chain and promotes folding in an environment in which there are many competing pathways for nonnative proteins. The chain is Probable prefoldin subunit 4 from Drosophila melanogaster (Fruit fly).